A 255-amino-acid chain; its full sequence is MAALYWQTEGAGNTDLVLLHGWGLNAQVWQSMVVRLAPHFRLHLVDLPGYGRSQGFGPMPLNDMANIVLTQAPERAVWLGWSLGGLVASQIALSAPLRVEKLITVASSPCFSAQDDWPGIKPDVLQGFQQQLSEDFQRTVERFLALQTLGTENARQDARLLKGVVLEQPMPSVDVLNGGLEILREADLRQPLADLTVPLLRLYGALDGLVPRKVAGRLDDEWPNSTSVVMPKAAHAPFISHPDAFTEQVIAFAQA.

Residues 16–242 form the AB hydrolase-1 domain; the sequence is LVLLHGWGLN…AAHAPFISHP (227 aa). Residues tryptophan 22, 82 to 83, and 143 to 147 each bind substrate; these read SL and FLALQ. The active-site Nucleophile is serine 82. Catalysis depends on residues aspartate 207 and histidine 235. Histidine 235 lines the substrate pocket.

The protein belongs to the AB hydrolase superfamily. Carboxylesterase BioH family. Monomer.

It is found in the cytoplasm. It carries out the reaction 6-carboxyhexanoyl-[ACP] methyl ester + H2O = 6-carboxyhexanoyl-[ACP] + methanol + H(+). The protein operates within cofactor biosynthesis; biotin biosynthesis. In terms of biological role, the physiological role of BioH is to remove the methyl group introduced by BioC when the pimeloyl moiety is complete. It allows to synthesize pimeloyl-ACP via the fatty acid synthetic pathway through the hydrolysis of the ester bonds of pimeloyl-ACP esters. In Pectobacterium atrosepticum (strain SCRI 1043 / ATCC BAA-672) (Erwinia carotovora subsp. atroseptica), this protein is Pimeloyl-[acyl-carrier protein] methyl ester esterase.